The chain runs to 72 residues: Translation initiation factor IF-1 (72 aa).

The region spanning 2–72 (AKEDVIEIQG…TKGRITYRFK (71 aa)) is the S1-like domain.

This sequence belongs to the IF-1 family. Component of the 30S ribosomal translation pre-initiation complex which assembles on the 30S ribosome in the order IF-2 and IF-3, IF-1 and N-formylmethionyl-tRNA(fMet); mRNA recruitment can occur at any time during PIC assembly.

It localises to the cytoplasm. Its function is as follows. One of the essential components for the initiation of protein synthesis. Stabilizes the binding of IF-2 and IF-3 on the 30S subunit to which N-formylmethionyl-tRNA(fMet) subsequently binds. Helps modulate mRNA selection, yielding the 30S pre-initiation complex (PIC). Upon addition of the 50S ribosomal subunit IF-1, IF-2 and IF-3 are released leaving the mature 70S translation initiation complex. The chain is Translation initiation factor IF-1 from Lactiplantibacillus plantarum (strain ATCC BAA-793 / NCIMB 8826 / WCFS1) (Lactobacillus plantarum).